The sequence spans 229 residues: Large ribosomal subunit protein uL1 (229 aa).

Belongs to the universal ribosomal protein uL1 family. In terms of assembly, part of the 50S ribosomal subunit.

Functionally, binds directly to 23S rRNA. The L1 stalk is quite mobile in the ribosome, and is involved in E site tRNA release. In terms of biological role, protein L1 is also a translational repressor protein, it controls the translation of the L11 operon by binding to its mRNA. This chain is Large ribosomal subunit protein uL1, found in Streptococcus uberis (strain ATCC BAA-854 / 0140J).